A 270-amino-acid chain; its full sequence is MEQMAHPSSTPLLVAEIGNTTAMFAVFSGTDPIDSLQVATAALSSPEAVGELLQPLLARHSLAADAVISSVVPRAGEAAGRWLLDILPGRVLAVDSTLNLPFRISYDPPSALGADRLSLCARCCMLEEEAAVIALDIGTAITFDVLSADRSYLGGLIMPGLELMASALHERTAQLPRVEVSRPERLMGLSTADCIRSGVVWGCVLQVEGLVRKIRGWLRSEHGEGYARVVATGGRAPLIVSMMEMPPLLDPHAVSRGARYLFELNRITVS.

E16–M23 is a binding site for ATP. Substrate-binding positions include Y106 and G113–R116. D115 (proton acceptor) is an active-site residue. Residue D136 participates in K(+) binding. Position 139 (T139) interacts with ATP. Position 191 (T191) interacts with substrate.

The protein belongs to the type III pantothenate kinase family. As to quaternary structure, homodimer. Requires NH4(+) as cofactor. K(+) is required as a cofactor.

The protein resides in the cytoplasm. It catalyses the reaction (R)-pantothenate + ATP = (R)-4'-phosphopantothenate + ADP + H(+). It participates in cofactor biosynthesis; coenzyme A biosynthesis; CoA from (R)-pantothenate: step 1/5. In terms of biological role, catalyzes the phosphorylation of pantothenate (Pan), the first step in CoA biosynthesis. This chain is Type III pantothenate kinase, found in Chlorobium luteolum (strain DSM 273 / BCRC 81028 / 2530) (Pelodictyon luteolum).